The chain runs to 156 residues: Acanthoscurrin-1 (156 aa).

The signal sequence occupies residues 1 to 23 (MAFRMKLVVCIVLLSTLAVMSSA). K155 carries the post-translational modification Lysine amide.

As to expression, expressed in hemocytes and secreted into the plasma following bacterial immune challenge.

Its subcellular location is the secreted. Functionally, antimicrobial protein. Strong activity against the Gram-negative bacterium E.coli SBS363 and yeast C.albicans. No detectable activity against the Gram-positive bacterium M.luteus. The chain is Acanthoscurrin-1 from Acanthoscurria gomesiana (Tarantula spider).